Here is a 209-residue protein sequence, read N- to C-terminus: CASP-like protein 1A1 (209 aa).

The interval 1 to 26 is disordered; the sequence is MEEAKHNEAEEAQGIEAREAKQIEAG. Over 1-49 the chain is Cytoplasmic; it reads MEEAKHNEAEEAQGIEAREAKQIEAGETSRSSRKLITFEPKLVINKGIS. Residues 50–70 traverse the membrane as a helical segment; the sequence is VLGFVLRLFAVFGTIGSALAM. At 71-95 the chain is on the extracellular side; it reads GTTHESVVSLSQLVLLKVKYSDLPT. A helical membrane pass occupies residues 96–116; the sequence is LMFFVVANAISGGYLVLSLPV. Over 117-130 the chain is Cytoplasmic; sequence SIFHIFSTQAKTSR. The chain crosses the membrane as a helical span at residues 131–151; the sequence is IILLVVDTVMLALVSSGASAA. At 152 to 183 the chain is on the extracellular side; that stretch reads TATVYLAHEGNTTANWPPICQQFDGFCERISG. N-linked (GlcNAc...) asparagine glycosylation is present at N162. The chain crosses the membrane as a helical span at residues 184 to 204; that stretch reads SLIGSFCAVILLMLIVINSAI. The Cytoplasmic portion of the chain corresponds to 205 to 209; sequence SLSRH.

The protein belongs to the Casparian strip membrane proteins (CASP) family. Homodimer and heterodimers. Expressed in the root endodermis.

The protein localises to the cell membrane. In Arabidopsis thaliana (Mouse-ear cress), this protein is CASP-like protein 1A1.